The following is a 382-amino-acid chain: uncharacterized protein (382 aa).

The next 12 membrane-spanning stretches (helical) occupy residues Gly-14–Ala-34, Val-45–Ile-65, Phe-79–Ala-99, Phe-102–Ser-122, Leu-131–Ser-151, Leu-157–Phe-177, Leu-204–Pro-224, Ala-235–Ile-255, Val-270–Pro-290, Ala-291–Cys-311, Ala-325–Met-345, and Phe-348–Leu-368.

Belongs to the major facilitator superfamily. YcaD (TC 2.A.1.26) family.

Its subcellular location is the cell inner membrane. This is an uncharacterized protein from Shigella flexneri serotype 5b (strain 8401).